The primary structure comprises 398 residues: Heat-inducible transcription repressor HrcA (398 aa).

Belongs to the HrcA family.

Negative regulator of class I heat shock genes (grpE-dnaK-dnaJ and groELS operons). Prevents heat-shock induction of these operons. The polypeptide is Heat-inducible transcription repressor HrcA (Chlamydia pneumoniae (Chlamydophila pneumoniae)).